Reading from the N-terminus, the 79-residue chain is Cyclin-dependent kinases regulatory subunit 1 (79 aa).

Ser2 carries the post-translational modification N-acetylserine.

It belongs to the CKS family. As to quaternary structure, forms a homohexamer that can probably bind six kinase subunits.

Binds to the catalytic subunit of the cyclin dependent kinases and is essential for their biological function. The chain is Cyclin-dependent kinases regulatory subunit 1 (CKS1B) from Bos taurus (Bovine).